Consider the following 177-residue polypeptide: uncharacterized protein (177 aa).

This is an uncharacterized protein from Grapevine virus A (isolate Is 151) (GVA).